Consider the following 209-residue polypeptide: NAD(P)H-quinone oxidoreductase subunit K 2 (209 aa).

[4Fe-4S] cluster-binding residues include cysteine 53, cysteine 54, cysteine 118, and cysteine 149.

The protein belongs to the complex I 20 kDa subunit family. In terms of assembly, NDH-1 can be composed of about 15 different subunits; different subcomplexes with different compositions have been identified which probably have different functions. Requires [4Fe-4S] cluster as cofactor.

It is found in the cellular thylakoid membrane. The enzyme catalyses a plastoquinone + NADH + (n+1) H(+)(in) = a plastoquinol + NAD(+) + n H(+)(out). The catalysed reaction is a plastoquinone + NADPH + (n+1) H(+)(in) = a plastoquinol + NADP(+) + n H(+)(out). In terms of biological role, NDH-1 shuttles electrons from an unknown electron donor, via FMN and iron-sulfur (Fe-S) centers, to quinones in the respiratory and/or the photosynthetic chain. The immediate electron acceptor for the enzyme in this species is believed to be plastoquinone. Couples the redox reaction to proton translocation, and thus conserves the redox energy in a proton gradient. Cyanobacterial NDH-1 also plays a role in inorganic carbon-concentration. In Acaryochloris marina (strain MBIC 11017), this protein is NAD(P)H-quinone oxidoreductase subunit K 2.